The primary structure comprises 519 residues: Glucose-1-phosphate adenylyltransferase large subunit 2, chloroplastic/amyloplastic (519 aa).

This sequence belongs to the bacterial/plant glucose-1-phosphate adenylyltransferase family. In terms of assembly, heterotetramer. Leaves and tubers.

It localises to the plastid. The protein localises to the chloroplast. It is found in the amyloplast. The enzyme catalyses alpha-D-glucose 1-phosphate + ATP + H(+) = ADP-alpha-D-glucose + diphosphate. Its pathway is glycan biosynthesis; starch biosynthesis. Its activity is regulated as follows. Activated by 3'phosphoglycerate, inhibited by orthophosphate. Allosteric regulation. Functionally, this protein plays a role in synthesis of starch. It catalyzes the synthesis of the activated glycosyl donor, ADP-glucose from Glc-1-P and ATP. This Solanum tuberosum (Potato) protein is Glucose-1-phosphate adenylyltransferase large subunit 2, chloroplastic/amyloplastic (AGPS2).